Here is a 295-residue protein sequence, read N- to C-terminus: Tissue factor (295 aa).

Residues 1 to 28 (MAIPMRPRLLAALAPTFLGFLLLQVAVG) form the signal peptide. The Extracellular portion of the chain corresponds to 29 to 252 (AGTPPGKAFN…TEQWKSVLGE (224 aa)). N-linked (GlcNAc...) asparagine glycans are attached at residues N38 and N58. C76 and C84 form a disulfide bridge. N95, N109, N170, and N201 each carry an N-linked (GlcNAc...) asparagine glycan. The cysteines at positions 219 and 242 are disulfide-linked. Positions 246 to 248 (WKS) match the WKS motif motif. The helical transmembrane segment at 253–275 (TLIIVGAVVFLVTVFIILLTISL) threads the bilayer. A lipid anchor (S-palmitoyl cysteine) is attached at C276. Residues 276–295 (CKRRKNRAGQKRKNTPSRLA) are Cytoplasmic-facing.

The protein belongs to the tissue factor family. In terms of assembly, interacts with HSPE; the interaction, inhibited by heparin, promotes the generation of activated factor X and activates coagulation in the presence of activated factor VII.

The protein localises to the membrane. In terms of biological role, initiates blood coagulation by forming a complex with circulating factor VII or VIIa. The [TF:VIIa] complex activates factors IX or X by specific limited proteolysis. TF plays a role in normal hemostasis by initiating the cell-surface assembly and propagation of the coagulation protease cascade. The protein is Tissue factor (F3) of Rattus norvegicus (Rat).